A 670-amino-acid chain; its full sequence is Catalase (670 aa).

Residues His61 and Asn132 contribute to the active site. A heme-binding site is contributed by Tyr345.

Belongs to the catalase family. As to quaternary structure, homotetramer. Heme serves as cofactor.

Its subcellular location is the peroxisome matrix. It carries out the reaction 2 H2O2 = O2 + 2 H2O. In terms of biological role, catalyzes the degradation of hydrogen peroxide (H(2)O(2)) generated by peroxisomal oxidases to water and oxygen, thereby protecting cells from the toxic effects of hydrogen peroxide. The polypeptide is Catalase (Penicillium janthinellum (Penicillium vitale)).